We begin with the raw amino-acid sequence, 885 residues long: Chromatin structure-remodeling complex protein RSC3 (885 aa).

Residues 14-42 (CVQCRKRKIGCDRVKPICGNCMKHNKMDC) constitute a DNA-binding region (zn(2)-C6 fungal-type). Ser95 and Ser236 each carry phosphoserine.

In terms of assembly, forms a heteromer with RSC30. Interacts with LDB7 and NPL6. Component of the two forms of the RSC complex composed of at least either RSC1 or RSC2, and ARP7, ARP9, LDB7, NPL6, RSC3, RSC30, RSC4, RSC58, RSC6, RSC8, RSC9, SFH1, STH1, HTL1 and probably RTT102. The complexes interact with histone and histone variant components of centromeric chromatin. Component of a fungal-specific module (HTL1-LDB7-NPL6-RSC3-RSC30) within the RSC complex.

The protein resides in the nucleus. Component of the chromatin structure-remodeling complex (RSC), which is involved in transcription regulation and nucleosome positioning. RSC is responsible for the transfer of a histone octamer from a nucleosome core particle to naked DNA. The reaction requires ATP and involves an activated RSC-nucleosome intermediate. Remodeling reaction also involves DNA translocation, DNA twist and conformational change. As a reconfigurer of centromeric and flanking nucleosomes, RSC complex is required both for proper kinetochore function in chromosome segregation and, via a PKC1-dependent signaling pathway, for organization of the cellular cytoskeleton. This subunit is required for transcription of ribosomal protein genes and genes involved in the integrity of the cell wall, and also for proper metaphase progression. Together with HTL1, LDB7, NPL6, RSC30 components, defines a fungal-specific module within the RSC complex that plays a role in many cellular functions including the maintenance of cell wall integrity. The sequence is that of Chromatin structure-remodeling complex protein RSC3 (RSC3) from Saccharomyces cerevisiae (strain ATCC 204508 / S288c) (Baker's yeast).